A 121-amino-acid polypeptide reads, in one-letter code: Large ribosomal subunit protein bL12 (121 aa).

It belongs to the bacterial ribosomal protein bL12 family. As to quaternary structure, homodimer. Part of the ribosomal stalk of the 50S ribosomal subunit. Forms a multimeric L10(L12)X complex, where L10 forms an elongated spine to which 2 to 4 L12 dimers bind in a sequential fashion. Binds GTP-bound translation factors.

In terms of biological role, forms part of the ribosomal stalk which helps the ribosome interact with GTP-bound translation factors. Is thus essential for accurate translation. This chain is Large ribosomal subunit protein bL12, found in Klebsiella pneumoniae (strain 342).